The following is a 707-amino-acid chain: DNA ligase (707 aa).

NAD(+) is bound by residues 36–40 (DADFD), 85–86 (SL), and glutamate 116. Lysine 118 functions as the N6-AMP-lysine intermediate in the catalytic mechanism. 4 residues coordinate NAD(+): arginine 139, glutamate 180, lysine 298, and lysine 322. Cysteine 416, cysteine 419, cysteine 434, and cysteine 440 together coordinate Zn(2+). Residues 613 to 707 (AASSKIAGRS…STHVDPERMV (95 aa)) enclose the BRCT domain.

It belongs to the NAD-dependent DNA ligase family. LigA subfamily. Requires Mg(2+) as cofactor. It depends on Mn(2+) as a cofactor.

The catalysed reaction is NAD(+) + (deoxyribonucleotide)n-3'-hydroxyl + 5'-phospho-(deoxyribonucleotide)m = (deoxyribonucleotide)n+m + AMP + beta-nicotinamide D-nucleotide.. Its function is as follows. DNA ligase that catalyzes the formation of phosphodiester linkages between 5'-phosphoryl and 3'-hydroxyl groups in double-stranded DNA using NAD as a coenzyme and as the energy source for the reaction. It is essential for DNA replication and repair of damaged DNA. This Nitrosospira multiformis (strain ATCC 25196 / NCIMB 11849 / C 71) protein is DNA ligase.